Consider the following 679-residue polypeptide: Protein hook (679 aa).

Residues 6–123 (NEMYYSLLEW…RLLQLVLGCA (118 aa)) form the Calponin-homology (CH) domain. Coiled-coil stretches lie at residues 135–437 (EIMC…LKCG) and 480–574 (QTAL…QEIL).

Belongs to the hook family. In terms of assembly, homodimer. Interacts with microtubules via its N-terminus.

Its subcellular location is the cytoplasm. The protein resides in the cytoskeleton. It is found in the endosome. It localises to the synapse. In terms of biological role, involved in endocytic trafficking by stabilizing organelles of the endocytic pathway. Probably acts as a cytoskeletal linker protein required to tether endosome vesicles to the cytoskeleton. Involved in modulation of endocytosis at stages required for down-regulation of membrane proteins that control synapse size. Not involved in synaptic vesicle recycling. Required in R7 cells for boss endocytosis into multivesicular bodies (MVBs). Has a role in regulating adult longevity. The polypeptide is Protein hook (Drosophila simulans (Fruit fly)).